The sequence spans 78 residues: Major outer membrane lipoprotein Lpp (78 aa).

A signal peptide spans 1 to 20 (MNRTKLVLGAVILASTMLAG). Cys-21 is lipidated: N-palmitoyl cysteine. Cys-21 carries S-diacylglycerol cysteine lipidation. 2 consecutive repeats follow at residues 24-34 (NAKIDQLSSDV) and 38-48 (NAKVDQLSNDV). The stretch at 27–75 (IDQLSSDVQTLNAKVDQLSNDVNAVRADVQAAKDDAARANQRLDNQAQA) forms a coiled coil. The residue at position 78 (Lys-78) is an N6-murein peptidoglycan lysine.

It belongs to the Lpp family. In terms of assembly, homotrimer.

It is found in the cell outer membrane. It localises to the secreted. Its subcellular location is the cell wall. Its function is as follows. A highly abundant outer membrane lipoprotein that controls the distance between the inner and outer membranes. The only protein known to be covalently linked to the peptidoglycan network (PGN). Also non-covalently binds the PGN. The link between the cell outer membrane and PGN contributes to maintenance of the structural and functional integrity of the cell envelope, and maintains the correct distance between the PGN and the outer membrane. This is Major outer membrane lipoprotein Lpp from Yersinia pestis.